We begin with the raw amino-acid sequence, 895 residues long: Cellulose 1,4-beta-cellobiosidase (895 aa).

The signal sequence occupies residues 1 to 27; the sequence is MNFRRMLCAAIVLTIVLSIMLPSTVFA. Residues 40–199 form the CBM-cenC domain; the sequence is NDLLYERTFD…YLDDVSLYDP (160 aa). Positions 199–240 are linker; it reads PRFVKPVEYVLPQPDVRVNQVGYLPFAKKYATVVSSSTSPLK. The catalytic stretch occupies residues 241–815; the sequence is WQLLNSANQV…WVTAYLDEID (575 aa). The active-site Nucleophile is aspartate 386. Active-site residues include histidine 737, aspartate 786, and glutamate 795. The 67-residue stretch at 828-894 folds into the Dockerin domain; sequence PEVIYGDCNG…ILKEIDVLPH (67 aa).

It belongs to the glycosyl hydrolase 9 (cellulase E) family.

It localises to the secreted. It carries out the reaction Hydrolysis of (1-&gt;4)-beta-D-glucosidic linkages in cellulose and cellotetraose, releasing cellobiose from the non-reducing ends of the chains.. Inhibited by cellobiose. The sequence is that of Cellulose 1,4-beta-cellobiosidase (celK) from Acetivibrio thermocellus (Hungateiclostridium thermocellum).